The chain runs to 433 residues: Tol-Pal system protein TolB (433 aa).

Positions 1–21 are cleaved as a signal peptide; that stretch reads MRNLLRGMLVVICCMAGIAAA.

Belongs to the TolB family. In terms of assembly, the Tol-Pal system is composed of five core proteins: the inner membrane proteins TolA, TolQ and TolR, the periplasmic protein TolB and the outer membrane protein Pal. They form a network linking the inner and outer membranes and the peptidoglycan layer.

It localises to the periplasm. Functionally, part of the Tol-Pal system, which plays a role in outer membrane invagination during cell division and is important for maintaining outer membrane integrity. The polypeptide is Tol-Pal system protein TolB (Pseudomonas fluorescens (strain ATCC BAA-477 / NRRL B-23932 / Pf-5)).